The primary structure comprises 438 residues: UDP-N-acetylmuramoylalanine--D-glutamate ligase (438 aa).

112 to 118 is a binding site for ATP; sequence GSNGKST.

It belongs to the MurCDEF family. Mg(2+) serves as cofactor.

It localises to the cytoplasm. The enzyme catalyses UDP-N-acetyl-alpha-D-muramoyl-L-alanine + D-glutamate + ATP = UDP-N-acetyl-alpha-D-muramoyl-L-alanyl-D-glutamate + ADP + phosphate + H(+). The protein operates within cell wall biogenesis; peptidoglycan biosynthesis. Cell wall formation. Catalyzes the addition of glutamate to the nucleotide precursor UDP-N-acetylmuramoyl-L-alanine (UMA). In Escherichia coli (strain K12), this protein is UDP-N-acetylmuramoylalanine--D-glutamate ligase (murD).